The sequence spans 593 residues: DNA primase (593 aa).

The segment at 40–64 (CPFHHEKTPSFTVSQKKQFYHCFGC) adopts a CHC2-type zinc-finger fold. The region spanning 260–342 (KQLLVVEGYM…GRQLKFIFLP (83 aa)) is the Toprim domain. Mg(2+) is bound by residues glutamate 266, aspartate 310, and aspartate 312.

This sequence belongs to the DnaG primase family. Monomer. Interacts with DnaB. Zn(2+) is required as a cofactor. The cofactor is Mg(2+).

The catalysed reaction is ssDNA + n NTP = ssDNA/pppN(pN)n-1 hybrid + (n-1) diphosphate.. Functionally, RNA polymerase that catalyzes the synthesis of short RNA molecules used as primers for DNA polymerase during DNA replication. The protein is DNA primase of Haemophilus influenzae (strain ATCC 51907 / DSM 11121 / KW20 / Rd).